Reading from the N-terminus, the 432-residue chain is Homeobox protein Hox-D3 (432 aa).

Disordered stretches follow at residues 43–62, 68–197, 253–280, and 400–432; these read YSTP…LDTD, CSIQ…SKRV, QKAK…AGHV, and HHGP…LTHL. Positions 97-106 are enriched in gly residues; the sequence is NSQGGGGGSQ. A compositionally biased stretch (pro residues) spans 116-131; the sequence is PPQPPPPPPTLPPSSP. Over residues 148–158 the composition is skewed to polar residues; that stretch reads NASSSSATISK. An Antp-type hexapeptide motif is present at residues 160–165; that stretch reads IFPWMK. Positions 194 to 253 form a DNA-binding region, homeobox; the sequence is SKRVRTAYTSAQLVELEKEFHFNRYLCRPRRVEMANLLNLTERQIKIWFQNRRMKYKKDQ.

It belongs to the Antp homeobox family.

It localises to the nucleus. In terms of biological role, sequence-specific transcription factor which is part of a developmental regulatory system that provides cells with specific positional identities on the anterior-posterior axis. The sequence is that of Homeobox protein Hox-D3 (HOXD3) from Homo sapiens (Human).